A 215-amino-acid polypeptide reads, in one-letter code: Intraflagellar transport protein 43 homolog B (215 aa).

The tract at residues 1-107 is disordered; that stretch reads MDDHLKLGDS…SDGEGDIPVI (107 aa).

Belongs to the IFT43 family. In terms of assembly, component of IFT complex A.

Its function is as follows. Component of IFT complex A (IFT-A) involved in retrograde ciliary transport along microtubules from the ciliary tip to the base. The protein is Intraflagellar transport protein 43 homolog B (ift43b) of Salmo salar (Atlantic salmon).